Here is an 851-residue protein sequence, read N- to C-terminus: MKNNDKLDSHTPMMQQYLRLKAQHPEILLFYRMGDFYELFYSDAKRASQLLDISLTKRGASAGEPIPMAGVPYHSIENYLAKLVQLGESAAICEQIGDPATSKGPVERKVVRIVTPGTISDEALLQERQDNLLAAIWQDAKGFGYATLDISSGRFRVAEPADLETMAAELQRTNPAELLYPENFEPMSLIEHRHGLRRRPLWEFELDTAKQQLNLQFGTRDLIGFGVEQAHLALRAAGCLLQYVKDTQRTSLPHIRGLTMERQQDGIIMDAATRRNLELTQNLSGGSENTLAAILDCSVTPMGSRMLKRWLHMPIRDIRVLTDRQQAIGGLQDIAAELQTPLRQVGDLERILARLALRTARPRDLARMRHAFQQLPEIHRLLQPIDVPHVQNLLSQVGQFDELQDLLERAIVETPPVLVRDGGVIASGYNAELDEWRALADGATDYLDRLEIREREKLGLDTLKVGFNGVHGYYIQVSRGQSHLVPIHYVRRQTLKNAERYIIPELKEYEDKVLTSKGKALAIEKGLYEEIFDLLLPHLPELQLSANALAELDVLANLAERAETLNYSCPTLSDKPGIKIMGGRHPVVEQVLKEPFISNPLTLSPQRRMLIITGPNMGGKSTYMRQTALIVLLAHLGSYVPADQATIGPIDRIFTRVGAADDLASGRSTFMVEMTETANILHNATEQSLVLMDEIGRGTSTYDGLSLAWACAENLASRIKAMTLFATHYFELTTLPEKMEGVVNVHLDALEHGETIAFMHSVQEGAASKSYGLAVAALAGVPRDVIKRARQKLKELESLSNNAAASTIDGSQMTLLNEEIPPAVEALEALDPDSLSPRQALEWIYRLKNMV.

614-621 (GPNMGGKS) serves as a coordination point for ATP.

The protein belongs to the DNA mismatch repair MutS family.

Its function is as follows. This protein is involved in the repair of mismatches in DNA. It is possible that it carries out the mismatch recognition step. This protein has a weak ATPase activity. This Yersinia pestis protein is DNA mismatch repair protein MutS.